The primary structure comprises 364 residues: Ribosomal RNA small subunit methyltransferase H (364 aa).

Residues 55 to 57 (GGH), aspartate 75, phenylalanine 101, aspartate 122, and glutamine 129 contribute to the S-adenosyl-L-methionine site. The interval 333–364 (LPPGGGAGFVKAGRVPGEPVRGTRAGSKGRRR) is disordered.

This sequence belongs to the methyltransferase superfamily. RsmH family.

The protein localises to the cytoplasm. The enzyme catalyses cytidine(1402) in 16S rRNA + S-adenosyl-L-methionine = N(4)-methylcytidine(1402) in 16S rRNA + S-adenosyl-L-homocysteine + H(+). Its function is as follows. Specifically methylates the N4 position of cytidine in position 1402 (C1402) of 16S rRNA. The sequence is that of Ribosomal RNA small subunit methyltransferase H from Bordetella bronchiseptica (strain ATCC BAA-588 / NCTC 13252 / RB50) (Alcaligenes bronchisepticus).